The chain runs to 268 residues: LOB domain-containing protein 13 (268 aa).

Residues 51–152 form the LOB domain; that stretch reads TPCAACKLLR…SELTTVRTEI (102 aa). Positions 191 to 268 are disordered; the sequence is LLPPPPPPPP…SSDNNVHYFD (78 aa). 2 stretches are compositionally biased toward pro residues: residues 192 to 205 and 212 to 222; these read LPPP…PRPP and PAPPPTPPVSL. A compositionally biased stretch (low complexity) spans 223-243; the sequence is PSPSMVVSSSSSSNSSATNSM. The segment covering 250–268 has biased composition (polar residues); that stretch reads STAGYSNSLSSDNNVHYFD.

Belongs to the LOB domain-containing protein family. As to expression, expressed in shoots and roots and at low levels in flowers, but not in leaves or inflorescence stems.

This chain is LOB domain-containing protein 13 (LBD13), found in Arabidopsis thaliana (Mouse-ear cress).